Consider the following 199-residue polypeptide: Recombination protein RecR (199 aa).

The segment at 57–72 (CRQCRTLTEDELCPQC) adopts a C4-type zinc-finger fold. The 95-residue stretch at 80–174 (SLLCVVQSPV…TISRIAHGVP (95 aa)) folds into the Toprim domain.

The protein belongs to the RecR family.

Its function is as follows. May play a role in DNA repair. It seems to be involved in an RecBC-independent recombinational process of DNA repair. It may act with RecF and RecO. This chain is Recombination protein RecR, found in Stutzerimonas stutzeri (strain A1501) (Pseudomonas stutzeri).